Here is a 1387-residue protein sequence, read N- to C-terminus: Mediator of RNA polymerase II transcription subunit 13 (1387 aa).

Disordered regions lie at residues 81 to 102, 354 to 400, and 620 to 676; these read ELNN…PEFS, HSAN…ESYS, and SVNS…DIPM. 2 stretches are compositionally biased toward polar residues: residues 354 to 367 and 390 to 400; these read HSAN…STGE and SRQNFPTESYS.

Belongs to the Mediator complex subunit 13 family. Component of the SRB8-11 complex, which itself associates with the Mediator complex.

Its subcellular location is the nucleus. In terms of biological role, component of the SRB8-11 complex. The SRB8-11 complex is a regulatory module of the Mediator complex which is itself involved in regulation of basal and activated RNA polymerase II-dependent transcription. The SRB8-11 complex may be involved in the transcriptional repression of a subset of genes regulated by Mediator. It may inhibit the association of the Mediator complex with RNA polymerase II to form the holoenzyme complex. This chain is Mediator of RNA polymerase II transcription subunit 13 (SSN2), found in Kluyveromyces lactis (strain ATCC 8585 / CBS 2359 / DSM 70799 / NBRC 1267 / NRRL Y-1140 / WM37) (Yeast).